Reading from the N-terminus, the 274-residue chain is Large ribosomal subunit protein uL2 (274 aa).

2 disordered regions span residues 36 to 61 and 223 to 274; these read QKSK…HKQR and VAMN…RRKR. The segment covering 37-46 has biased composition (polar residues); the sequence is KSKTGGRNSN. Composition is skewed to basic residues over residues 50–61 and 254–274; these read TTRHRGGGHKQR and KGHK…RRKR.

It belongs to the universal ribosomal protein uL2 family. Part of the 50S ribosomal subunit. Forms a bridge to the 30S subunit in the 70S ribosome.

Its function is as follows. One of the primary rRNA binding proteins. Required for association of the 30S and 50S subunits to form the 70S ribosome, for tRNA binding and peptide bond formation. It has been suggested to have peptidyltransferase activity; this is somewhat controversial. Makes several contacts with the 16S rRNA in the 70S ribosome. The protein is Large ribosomal subunit protein uL2 of Halorhodospira halophila (strain DSM 244 / SL1) (Ectothiorhodospira halophila (strain DSM 244 / SL1)).